The chain runs to 518 residues: Protease Do-like 4, mitochondrial (518 aa).

The transit peptide at methionine 1 to phenylalanine 23 directs the protein to the mitochondrion. The interval glutamate 98 to leucine 262 is serine protease. Residues histidine 116, aspartate 147, and serine 225 each act as charge relay system in the active site. Residues aspartate 278 to glutamate 358 enclose the PDZ domain.

Belongs to the peptidase S1C family.

The protein resides in the mitochondrion membrane. Functionally, putative serine protease. The polypeptide is Protease Do-like 4, mitochondrial (DEGP4) (Arabidopsis thaliana (Mouse-ear cress)).